Reading from the N-terminus, the 360-residue chain is Aminomethyltransferase (360 aa).

It belongs to the GcvT family. In terms of assembly, the glycine cleavage system is composed of four proteins: P, T, L and H.

The catalysed reaction is N(6)-[(R)-S(8)-aminomethyldihydrolipoyl]-L-lysyl-[protein] + (6S)-5,6,7,8-tetrahydrofolate = N(6)-[(R)-dihydrolipoyl]-L-lysyl-[protein] + (6R)-5,10-methylene-5,6,7,8-tetrahydrofolate + NH4(+). The glycine cleavage system catalyzes the degradation of glycine. The chain is Aminomethyltransferase from Methylococcus capsulatus (strain ATCC 33009 / NCIMB 11132 / Bath).